Here is a 541-residue protein sequence, read N- to C-terminus: Zinc finger protein 513 (541 aa).

The segment at 1–118 (MPRRKQSHPQ…GEARGERPGP (118 aa)) is disordered. Residues 44–57 (LEFEEEEEEEEGDG) are compositionally biased toward acidic residues. 2 positions are modified to phosphoserine: serine 85 and serine 96. The span at 103–115 (EPARGPGEARGER) shows a compositional bias: basic and acidic residues. 8 consecutive C2H2-type zinc fingers follow at residues 150–172 (YSCR…MQTH), 178–200 (FRCG…TRTH), 206–228 (YRCP…QRTH), 360–382 (FACS…MKTH), 388–410 (FRCA…QRVH), 416–438 (YKCP…GRIH), 444–466 (FRCS…MLRH), and 472–494 (FRCA…QKVH). The segment at 492–541 (KVHGHGGAGGPGLSASEGWAPPHSPPSVLSSRGPPALGTAGSRAVHTDSS) is disordered.

Belongs to the krueppel C2H2-type zinc-finger protein family. In terms of assembly, binds DNA. Can associate with the proximal promoter regions of PAX6 and SP4, and their known targets including ARR3, RHO, OPN1MW2 and OPN1SW. In terms of tissue distribution, in the retina, expressed in the outer and inner nuclear layers, and the ganglion cell layer.

Its subcellular location is the nucleus. Its function is as follows. Transcriptional regulator that plays a role in retinal development and maintenance. The chain is Zinc finger protein 513 (ZNF513) from Homo sapiens (Human).